A 111-amino-acid chain; its full sequence is UPF0339 protein ACIAD0721 (111 aa).

2 tandem repeats follow at residues 10 to 58 (AKDG…RYER) and 61 to 109 (AKND…VKDL). A disordered region spans residues 89 to 111 (SRDKGIESVKNNGTTATVKDLTG).

Belongs to the UPF0339 family. Duplicated subfamily.

In Acinetobacter baylyi (strain ATCC 33305 / BD413 / ADP1), this protein is UPF0339 protein ACIAD0721.